A 542-amino-acid chain; its full sequence is DM7 family protein GG17591 (542 aa).

Basic and acidic residues predominate over residues 415 to 430 (GETQEMDEAHPTKEES). A disordered region spans residues 415-443 (GETQEMDEAHPTKEESKSEEEGEVQSGSQ).

The protein belongs to the DM7 family.

This Drosophila erecta (Fruit fly) protein is DM7 family protein GG17591.